The primary structure comprises 1252 residues: Guanine nucleotide exchange factor SDC25 (1252 aa).

In terms of domain architecture, SH3 spans 26-97; the sequence is QPIDVVECTY…PPSFTRSILN (72 aa). Disordered regions lie at residues 409 to 454 and 623 to 648; these read IPAS…DTIW and LNLDNAKDKKNGSQNTDIQEEEDEYE. Residues 416–428 show a composition bias toward low complexity; that stretch reads TSCSSETSHHSPS. An N-terminal Ras-GEF domain is found at 782–914; it reads SNNRIKGGSK…LLKEVNQKFK (133 aa). Positions 952 to 1199 constitute a Ras-GEF domain; sequence DPVLFATQLT…YQLSLIIEPK (248 aa). The interval 1201 to 1252 is disordered; the sequence is RKKVVPNSNSNNKSQEKSRDDQTDEGKTSTKKDRFSKFQLHKTKKKAPKVSK. Residues 1214-1236 show a composition bias toward basic and acidic residues; the sequence is SQEKSRDDQTDEGKTSTKKDRFS. A compositionally biased stretch (basic residues) spans 1239 to 1252; sequence QLHKTKKKAPKVSK.

In terms of biological role, promotes the exchange of Ras-bound GDP by GTP. The polypeptide is Guanine nucleotide exchange factor SDC25 (SDC25) (Saccharomyces cerevisiae (strain YJM789) (Baker's yeast)).